Reading from the N-terminus, the 874-residue chain is Alanine--tRNA ligase (874 aa).

The Zn(2+) site is built by H562, H566, C664, and H668.

The protein belongs to the class-II aminoacyl-tRNA synthetase family. The cofactor is Zn(2+).

Its subcellular location is the cytoplasm. The enzyme catalyses tRNA(Ala) + L-alanine + ATP = L-alanyl-tRNA(Ala) + AMP + diphosphate. Its function is as follows. Catalyzes the attachment of alanine to tRNA(Ala) in a two-step reaction: alanine is first activated by ATP to form Ala-AMP and then transferred to the acceptor end of tRNA(Ala). Also edits incorrectly charged Ser-tRNA(Ala) and Gly-tRNA(Ala) via its editing domain. The chain is Alanine--tRNA ligase from Neisseria meningitidis serogroup C (strain 053442).